The primary structure comprises 102 residues: Citrate lyase acyl carrier protein (102 aa).

Ser14 carries the O-(phosphoribosyl dephospho-coenzyme A)serine modification.

This sequence belongs to the CitD family. As to quaternary structure, oligomer with a subunit composition of (alpha,beta,gamma)6.

Its subcellular location is the cytoplasm. Its function is as follows. Covalent carrier of the coenzyme of citrate lyase. This Streptococcus mutans serotype c (strain ATCC 700610 / UA159) protein is Citrate lyase acyl carrier protein.